The sequence spans 394 residues: MANEKFIRNKPHLNVGTIGHVDHGKTTLTAAITQVLSTRGLAKSRAYDQIDNAPEERERGITIKTSHVEYETEKRHYAHVDCPGHADYVKNMITGAAQMDAAILVVSGADSVMPQTREHILLARQVGVPKIVVFLNKCDLSPDEQILELVEMEVRELLSQYDFPGDDIPVIRGSALKALEGDAHYVAQVNELIETLDTYIEDPVREVDKPFLMPVEDVFTITGRGTVVTGRVERGQVKAGDEVEIVGLKETRKTIVTAVEMFKKDLDFAQAGDNVGALLRGINREDVQRGQVLAKPGSVKPHSKFVAQVYVLTKEEGGRHTAFFSQYRPQFYFRTTDITGVVELQGDVKMVMPGDNAELVVTLNNPIAIEEGTKFSIREGGKTVGAGSVSKLLN.

One can recognise a tr-type G domain in the interval 10–204 (KPHLNVGTIG…TLDTYIEDPV (195 aa)). The tract at residues 19–26 (GHVDHGKT) is G1. 19–26 (GHVDHGKT) lines the GTP pocket. Residue Thr26 participates in Mg(2+) binding. The G2 stretch occupies residues 60–64 (GITIK). Residues 81–84 (DCPG) form a G3 region. GTP-binding positions include 81 to 85 (DCPGH) and 136 to 139 (NKCD). Residues 136 to 139 (NKCD) form a G4 region. The interval 174-176 (SAL) is G5.

It belongs to the TRAFAC class translation factor GTPase superfamily. Classic translation factor GTPase family. EF-Tu/EF-1A subfamily. Monomer.

Its subcellular location is the cytoplasm. It catalyses the reaction GTP + H2O = GDP + phosphate + H(+). GTP hydrolase that promotes the GTP-dependent binding of aminoacyl-tRNA to the A-site of ribosomes during protein biosynthesis. The chain is Elongation factor Tu from Onion yellows phytoplasma (strain OY-M).